A 341-amino-acid chain; its full sequence is L-threonine 3-dehydrogenase (341 aa).

Position 38 (cysteine 38) interacts with Zn(2+). Residues threonine 40 and histidine 43 each act as charge relay system in the active site. Residues histidine 63, glutamate 64, cysteine 93, cysteine 96, cysteine 99, and cysteine 107 each coordinate Zn(2+). NAD(+)-binding positions include isoleucine 175, aspartate 195, arginine 200, 262–264, and 286–287; these read LGI and IY.

This sequence belongs to the zinc-containing alcohol dehydrogenase family. In terms of assembly, homotetramer. Zn(2+) serves as cofactor.

Its subcellular location is the cytoplasm. The enzyme catalyses L-threonine + NAD(+) = (2S)-2-amino-3-oxobutanoate + NADH + H(+). Its pathway is amino-acid degradation; L-threonine degradation via oxydo-reductase pathway; glycine from L-threonine: step 1/2. Catalyzes the NAD(+)-dependent oxidation of L-threonine to 2-amino-3-ketobutyrate. This chain is L-threonine 3-dehydrogenase, found in Shewanella sediminis (strain HAW-EB3).